The sequence spans 293 residues: Elongation factor Ts (293 aa).

An involved in Mg(2+) ion dislocation from EF-Tu region spans residues 80 to 83; that stretch reads TDFV.

This sequence belongs to the EF-Ts family.

It localises to the cytoplasm. Functionally, associates with the EF-Tu.GDP complex and induces the exchange of GDP to GTP. It remains bound to the aminoacyl-tRNA.EF-Tu.GTP complex up to the GTP hydrolysis stage on the ribosome. The chain is Elongation factor Ts from Burkholderia lata (strain ATCC 17760 / DSM 23089 / LMG 22485 / NCIMB 9086 / R18194 / 383).